Reading from the N-terminus, the 312-residue chain is Protein lon-1 (312 aa).

An N-terminal signal peptide occupies residues 1-18; sequence MNYLLTALIALLAPISVA. Residues 87-209 form the SCP domain; that stretch reads EHNRYRRMVP…GHRNVFVCHY (123 aa). The N-linked (GlcNAc...) asparagine glycan is linked to N142. Residues 265 to 284 show a composition bias toward low complexity; that stretch reads TTTTESTTTSTTTEEPTTTC. The segment at 265–312 is disordered; that stretch reads TTTTESTTTSTTTEEPTTTCEPDEPEAEGADNNQEEEEENNDGFRMRV. Positions 285 to 305 are enriched in acidic residues; the sequence is EPDEPEAEGADNNQEEEEENN.

It belongs to the CRISP family. Expressed in hypodermal tissues.

Its function is as follows. Regulates body size morphogenesis, but does not affect male tail development. The polypeptide is Protein lon-1 (lon-1) (Caenorhabditis elegans).